The sequence spans 608 residues: Threonine--tRNA ligase (608 aa).

The editing domain stretch occupies residues 1–144 (MRILLIHSDY…SRTITAEEEE (144 aa)). Residues 195-489 (PHVKLMREKE…ELDEKAPMLP (295 aa)) are catalytic. Residues Cys-286, His-338, and His-459 each coordinate Zn(2+).

This sequence belongs to the class-II aminoacyl-tRNA synthetase family. As to quaternary structure, homodimer. Requires Zn(2+) as cofactor.

It is found in the cytoplasm. The catalysed reaction is tRNA(Thr) + L-threonine + ATP = L-threonyl-tRNA(Thr) + AMP + diphosphate + H(+). Its function is as follows. Catalyzes the attachment of threonine to tRNA(Thr) in a two-step reaction: L-threonine is first activated by ATP to form Thr-AMP and then transferred to the acceptor end of tRNA(Thr). Also edits incorrectly charged L-seryl-tRNA(Thr). This is Threonine--tRNA ligase from Methanobrevibacter smithii (strain ATCC 35061 / DSM 861 / OCM 144 / PS).